A 260-amino-acid polypeptide reads, in one-letter code: MFYMLGKRRRMSRIMKNGRTVILPMDHGITKPEKGIEKVDRVVEEVQDYIDAVIVHKGVAKRSAVLADIDAALIIHLSASTSLAPDPNDKRIVTSVEKAIALGADAVSIHVNIGSKTEAEQIEKAGTISEICDDYGIPLLAMMYPRGSIDVTTETVRHAARIGYELGADILKVPYVQSFEEVVAVCDIPVVVAGGSKGSEHEFLKRVEDAIAKGAAGVAAGRNVFNSDHPVRIAKALHMIVHGNMHMEEVMEYEGNMVVG.

D26 serves as the catalytic Proton acceptor. Residues 26–30 and 144–146 contribute to the 1-deoxy-D-threo-hexo-2,5-diulose 6-phosphate site; these read DHGIT and YPR. Y144 acts as the Proton donor in catalysis. The Schiff-base intermediate with substrate role is filled by K172. 1-deoxy-D-threo-hexo-2,5-diulose 6-phosphate-binding positions include 194–195 and 221–222; these read GG and GR.

The protein belongs to the DeoC/FbaB aldolase family. ADHS subfamily. Homodecamer.

The enzyme catalyses 1-deoxy-D-threo-hexo-2,5-diulose 6-phosphate + L-aspartate 4-semialdehyde = 2,3-dioxopropyl phosphate + 2-amino-2,3,7-trideoxy-D-lyxo-hept-6-ulosonate. Functionally, catalyzes a transaldol reaction between 6-deoxy-5-ketofructose 1-phosphate (DKFP) and L-aspartate semialdehyde (ASA) with an elimination of hydroxypyruvaldehyde phosphate to yield 2-amino-3,7-dideoxy-D-threo-hept-6-ulosonate (ADH). Plays a key role in an alternative pathway of the biosynthesis of 3-dehydroquinate (DHQ), which is involved in the canonical pathway for the biosynthesis of aromatic amino acids. The sequence is that of 2-amino-3,7-dideoxy-D-threo-hept-6-ulosonate synthase 1 from Archaeoglobus fulgidus (strain ATCC 49558 / DSM 4304 / JCM 9628 / NBRC 100126 / VC-16).